Consider the following 221-residue polypeptide: Ribonuclease T (221 aa).

An Exonuclease domain is found at 20–194 (VVIDIETAGF…YDTLQTANLF (175 aa)). Residues Asp23, Glu25, His181, and Asp186 each contribute to the Mg(2+) site. Residue His181 is the Proton donor/acceptor of the active site.

The protein belongs to the RNase T family. Homodimer. Mg(2+) serves as cofactor.

Trims short 3' overhangs of a variety of RNA species, leaving a one or two nucleotide 3' overhang. Responsible for the end-turnover of tRNA: specifically removes the terminal AMP residue from uncharged tRNA (tRNA-C-C-A). Also appears to be involved in tRNA biosynthesis. The polypeptide is Ribonuclease T (Buchnera aphidicola subsp. Acyrthosiphon pisum (strain APS) (Acyrthosiphon pisum symbiotic bacterium)).